Reading from the N-terminus, the 1857-residue chain is Fer-1-like protein 6 (1857 aa).

Over 1-1824 (MFGLKVKKKR…YLIWKNYKKY (1824 aa)) the chain is Cytoplasmic. Positions 15–63 (KGLILANKAAKDSQGDTEALQEEPSHQEGPRGDLVHDDASIFPVPSASP) are disordered. The segment covering 37-53 (EPSHQEGPRGDLVHDDA) has biased composition (basic and acidic residues). 2 consecutive C2 domains span residues 65–181 (RRSK…QFCN) and 225–356 (PIEK…DKGF). Residues 426 to 447 (SKDKDSKSSKGKDKADKTEDGK) show a composition bias toward basic and acidic residues. Residues 426–469 (SKDKDSKSSKGKDKADKTEDGKSQQASNKTNSTEVEVESFDVPP) are disordered. The segment covering 448–459 (SQQASNKTNSTE) has biased composition (polar residues). C2 domains are found at residues 810-937 (GTNH…RLCY) and 969-1099 (PVEP…LAPI). Aspartate 842, aspartate 848, aspartate 904, and aspartate 906 together coordinate Ca(2+). Disordered regions lie at residues 1101 to 1148 (QVDG…VVPD), 1161 to 1203 (PDSS…RTIA), and 1224 to 1246 (AQKA…PDEV). Residues 1113 to 1129 (DSLTATESSGAHSSSQD) are compositionally biased toward polar residues. Over residues 1178–1189 (PPKDGKPKDPRK) the composition is skewed to basic and acidic residues. Over residues 1190-1200 (PSRRSTKRRKR) the composition is skewed to basic residues. Positions 1226–1245 (KAKERNPKGKKGNTEAKPDE) are enriched in basic and acidic residues. 2 C2 domains span residues 1338-1457 (DSGQ…AICG) and 1578-1729 (DMPQ…KACD). Residues aspartate 1372, aspartate 1378, aspartate 1427, aspartate 1429, and aspartate 1435 each coordinate Ca(2+). The helical transmembrane segment at 1825–1845 (IIIAFILIILIIFLVLFIYTL) threads the bilayer. The Extracellular segment spans residues 1846 to 1857 (PGAISRRIVVGS).

Belongs to the ferlin family. Ca(2+) serves as cofactor.

It is found in the membrane. This is Fer-1-like protein 6 (FER1L6) from Homo sapiens (Human).